Consider the following 189-residue polypeptide: Ribosome maturation factor RimM (189 aa).

Residues 110-189 (DDEYYWKDLI…TVTVDWDPNF (80 aa)) form the PRC barrel domain.

The protein belongs to the RimM family. Binds ribosomal protein uS19.

The protein localises to the cytoplasm. Its function is as follows. An accessory protein needed during the final step in the assembly of 30S ribosomal subunit, possibly for assembly of the head region. Essential for efficient processing of 16S rRNA. May be needed both before and after RbfA during the maturation of 16S rRNA. It has affinity for free ribosomal 30S subunits but not for 70S ribosomes. The sequence is that of Ribosome maturation factor RimM from Blochmanniella pennsylvanica (strain BPEN).